The primary structure comprises 152 residues: uncharacterized protein (152 aa).

The next 3 membrane-spanning stretches (helical) occupy residues I15–I35, L43–T63, and T117–I137.

The protein to M.jannaschii MJ0129 and MJ0587.

It localises to the cell membrane. This is an uncharacterized protein from Methanocaldococcus jannaschii (strain ATCC 43067 / DSM 2661 / JAL-1 / JCM 10045 / NBRC 100440) (Methanococcus jannaschii).